The sequence spans 824 residues: Lon protease (824 aa).

The disordered stretch occupies residues 1–23 (MNEPMSLFDDLPEEHDEPQEAPE). Over residues 10–20 (DLPEEHDEPQE) the composition is skewed to acidic residues. Residues 26–222 (LPMVVLGEMV…KVYLVLARQL (197 aa)) form the Lon N-terminal domain. 375–382 (GPPGVGKT) lines the ATP pocket. Residues 617–798 (QDEVGVATGV…DEVLRIALSR (182 aa)) enclose the Lon proteolytic domain. Active-site residues include Ser704 and Lys747. The segment at 800-824 (PTPANNQNGSHTNNRGQPSPAPAGT) is disordered. Polar residues predominate over residues 802 to 816 (PANNQNGSHTNNRGQ).

The protein belongs to the peptidase S16 family. As to quaternary structure, homohexamer. Organized in a ring with a central cavity.

It localises to the cytoplasm. It catalyses the reaction Hydrolysis of proteins in presence of ATP.. Its function is as follows. ATP-dependent serine protease that mediates the selective degradation of mutant and abnormal proteins as well as certain short-lived regulatory proteins. Required for cellular homeostasis and for survival from DNA damage and developmental changes induced by stress. Degrades polypeptides processively to yield small peptide fragments that are 5 to 10 amino acids long. Binds to DNA in a double-stranded, site-specific manner. This chain is Lon protease, found in Chloroflexus aggregans (strain MD-66 / DSM 9485).